Reading from the N-terminus, the 853-residue chain is Trimethylguanosine synthase (853 aa).

The interval 53 to 80 (NNSGDQATEEEEGGYSCGTAESHDSKGI) is disordered. Ser55 carries the phosphoserine modification. Thr60 is subject to Phosphothreonine. Phosphoserine is present on residues Ser85, Ser89, Ser96, and Ser141. Tyr146 is modified (phosphotyrosine). The tract at residues 149 to 187 (DDILASDDPSSIEQYENTRTYELQSKKDTETENPPVENT) is disordered. Ser154 is subject to Phosphoserine. A compositionally biased stretch (polar residues) spans 156–171 (DPSSIEQYENTRTYEL). Ser189 carries the phosphoserine modification. 2 disordered regions span residues 334 to 461 (SQLD…GGIP) and 527 to 632 (DEEA…KKVN). Residues 367–382 (NGGTNEESNSSGNTNT) are compositionally biased toward low complexity. 3 positions are modified to phosphoserine: Ser412, Ser438, and Ser578. Over residues 431 to 442 (DIDENPASDFDD) the composition is skewed to acidic residues. Over residues 564–578 (ETNNPEPEKCQSVSS) the composition is skewed to polar residues. Basic and acidic residues predominate over residues 608–619 (PDSRQAETEAEV). Positions 620-630 (KKKKNKKKNKK) are enriched in basic residues. The tract at residues 631–846 (VNGLPPEIAA…TITAYFGDLI (216 aa)) is sufficient for catalytic activity. Asp719 is a binding site for S-adenosyl-L-methionine. Trp766 serves as a coordination point for N(7)-methylguanosine.

It belongs to the methyltransferase superfamily. Trimethylguanosine synthase family. May form homooligomers. Interacts with CREBBP/CBP, EED/WAIT1, EP300/P300, NCOA6/PRIP, PPARBP/PBP and SMN. Ubiquitously expressed. High expression in heart, skeletal muscle, kidney, liver and placenta.

The protein localises to the cytoplasm. The protein resides in the nucleus. It localises to the cajal body. It is found in the nucleolus. It carries out the reaction a 5'-end (N(7)-methyl 5'-triphosphoguanosine)-ribonucleoside in snRNA + S-adenosyl-L-methionine = a 5'-end (N(2),N(7)-dimethyl 5'-triphosphoguanosine)-ribonucleoside in snRNA + S-adenosyl-L-homocysteine + H(+). It catalyses the reaction a 5'-end (N(7)-methyl 5'-triphosphoguanosine)-ribonucleoside in snoRNA + S-adenosyl-L-methionine = a 5'-end (N(2),N(7)-dimethyl 5'-triphosphoguanosine)-ribonucleoside in snoRNA + S-adenosyl-L-homocysteine + H(+). The catalysed reaction is a 5'-end (N(2),N(7)-dimethyl 5'-triphosphoguanosine)-ribonucleoside in snRNA + S-adenosyl-L-methionine = a 5'-end (N(2),N(2),N(7)-trimethyl 5'-triphosphoguanosine)-ribonucleoside in snRNA + S-adenosyl-L-homocysteine + H(+). The enzyme catalyses a 5'-end (N(2),N(7)-dimethyl 5'-triphosphoguanosine)-ribonucleoside in snoRNA + S-adenosyl-L-methionine = a 5'-end (N(2),N(2),N(7)-trimethyl 5'-triphosphoguanosine)-ribonucleoside in snoRNA + S-adenosyl-L-homocysteine + H(+). Catalyzes the 2 serial methylation steps for the conversion of the 7-monomethylguanosine (m(7)G) caps of snRNAs and snoRNAs to a 2,2,7-trimethylguanosine (m(2,2,7)G) cap structure. The enzyme is specific for guanine, and N7 methylation must precede N2 methylation. Hypermethylation of the m7G cap of U snRNAs leads to their concentration in nuclear foci, their colocalization with coilin and the formation of canonical Cajal bodies (CBs). Plays a role in transcriptional regulation. The chain is Trimethylguanosine synthase (TGS1) from Homo sapiens (Human).